The sequence spans 635 residues: Leucine-rich repeat and fibronectin type-III domain-containing protein 4 (635 aa).

The signal sequence occupies residues 1–16; sequence MAPPLLLLLLASGAAA. An LRRNT domain is found at 17–48; that stretch reads CPLPCVCQNLSESLSTLCAHRGLLFVPPNVDR. The Extracellular segment spans residues 17–518; sequence CPLPCVCQNL…LQAHVLGGTL (502 aa). Residues asparagine 25 and asparagine 70 are each glycosylated (N-linked (GlcNAc...) asparagine). 7 LRR repeats span residues 49–70, 73–94, 97–118, 121–142, 146–161, 170–191, and 194–215; these read RTVE…DFRN, GLVD…AFGD, SLRS…SLRG, NLQH…AFDD, SLED…RQVP, ALHT…AFAQ, and QLSR…PLFS. An LRRCT domain is found at 234-280; it reads NPLHCNCELLWLRRLARPDDLETCASPPGLAGRYFWAVPEGEFSCEP. Residues 281-367 enclose the Ig-like domain; that stretch reads PLIARHTQRL…GEATARVELR (87 aa). A disulfide bridge links cysteine 302 with cysteine 351. Residues asparagine 324, asparagine 333, asparagine 376, and asparagine 440 are each glycosylated (N-linked (GlcNAc...) asparagine). A disordered region spans residues 373–410; that stretch reads HGGNSSAEGGRPGPSDIAASARTAAEGEGTLESEPAVQ. Positions 405–502 constitute a Fibronectin type-III domain; that stretch reads SEPAVQVTEV…GCAHFSTLPA (98 aa). A helical transmembrane segment spans residues 519-539; it reads TVAVGGVLVAALLVFTVALLV. The Cytoplasmic segment spans residues 540–635; the sequence is RGRGAGNGRL…SAERLEESVV (96 aa). Residues 555-583 are disordered; it reads HVQSQTNGGPSPTPKAHPPRSPPPRPQRS. The segment covering 565-580 has biased composition (pro residues); it reads SPTPKAHPPRSPPPRP. 2 positions are modified to phosphoserine: serine 585 and serine 626. The PDZ-binding signature appears at 632–635; the sequence is ESVV.

Belongs to the LRFN family. As to quaternary structure, can form heteromeric complexes with LRFN1, LRFN2, LRFN3 and LRFN5. Unable to form homophilic interactions across cell junctions. Interacts with DLG1, DLG2, DLG3 and DLG4. Post-translationally, glycosylated.

The protein localises to the membrane. Functionally, promotes neurite outgrowth in hippocampal neurons. May play a role in redistributing DLG4 to the cell periphery. The sequence is that of Leucine-rich repeat and fibronectin type-III domain-containing protein 4 (LRFN4) from Homo sapiens (Human).